The primary structure comprises 388 residues: LL-diaminopimelate aminotransferase (388 aa).

Residues tyrosine 15 and glycine 40 each contribute to the substrate site. Residues tyrosine 69, 103–104 (SK), tyrosine 128, asparagine 178, tyrosine 209, and 237–239 (SLS) contribute to the pyridoxal 5'-phosphate site. Residues lysine 104, tyrosine 128, and asparagine 178 each coordinate substrate. Lysine 240 is subject to N6-(pyridoxal phosphate)lysine. Arginine 248 contacts pyridoxal 5'-phosphate. Arginine 366 serves as a coordination point for substrate.

It belongs to the class-I pyridoxal-phosphate-dependent aminotransferase family. LL-diaminopimelate aminotransferase subfamily. As to quaternary structure, homodimer. It depends on pyridoxal 5'-phosphate as a cofactor.

The catalysed reaction is (2S,6S)-2,6-diaminopimelate + 2-oxoglutarate = (S)-2,3,4,5-tetrahydrodipicolinate + L-glutamate + H2O + H(+). It participates in amino-acid biosynthesis; L-lysine biosynthesis via DAP pathway; LL-2,6-diaminopimelate from (S)-tetrahydrodipicolinate (aminotransferase route): step 1/1. In terms of biological role, involved in the synthesis of meso-diaminopimelate (m-DAP or DL-DAP), required for both lysine and peptidoglycan biosynthesis. Catalyzes the direct conversion of tetrahydrodipicolinate to LL-diaminopimelate. Can also use m-DAP instead of LL-DAP as the amino-group donor. This is LL-diaminopimelate aminotransferase from Syntrophobacter fumaroxidans (strain DSM 10017 / MPOB).